Consider the following 89-residue polypeptide: Small ribosomal subunit protein uS15 (89 aa).

It belongs to the universal ribosomal protein uS15 family. As to quaternary structure, part of the 30S ribosomal subunit. Forms a bridge to the 50S subunit in the 70S ribosome, contacting the 23S rRNA.

One of the primary rRNA binding proteins, it binds directly to 16S rRNA where it helps nucleate assembly of the platform of the 30S subunit by binding and bridging several RNA helices of the 16S rRNA. In terms of biological role, forms an intersubunit bridge (bridge B4) with the 23S rRNA of the 50S subunit in the ribosome. The chain is Small ribosomal subunit protein uS15 from Enterobacter sp. (strain 638).